Here is a 2102-residue protein sequence, read N- to C-terminus: Probable serine/threonine-protein kinase DDB_G0272282 (2102 aa).

Residues 1 to 118 (MKYQLSILGD…NWLVPQNEPA (118 aa)) form the PX domain. A PH domain is found at 124–222 (NPDKSGYLIK…WIKAIELSQQ (99 aa)). Positions 225–240 (QDQEQYRKQEEEERQK) are enriched in basic and acidic residues. 9 disordered regions span residues 225-289 (QDQE…SDGS), 302-390 (GPNN…SDLN), 426-558 (EQPG…SASP), 574-665 (SNLP…PLPN), 685-768 (NNNS…NNSL), 804-842 (KKKE…GTLR), 1029-1051 (QQQQ…SSVN), 1106-1224 (GTPT…PQPQ), and 1476-1514 (SSKV…SSLT). Composition is skewed to low complexity over residues 256–281 (STLT…LPSS) and 304–327 (NNSN…NNHN). A compositionally biased stretch (basic residues) spans 328-348 (HYNHHNNNHNNSHHHHHHHNG). 2 stretches are compositionally biased toward low complexity: residues 353–376 (SSQV…STSL) and 426–437 (EQPGSYQQPQHQ). Positions 438–450 (QGGGGGGGGGGGN) are enriched in gly residues. Residues 466-484 (SNLSSRSNSNSSGSSSGSG) are compositionally biased toward low complexity. Gly residues predominate over residues 485–501 (SSSGSGPIGSGGVGGGL). Low complexity-rich tracts occupy residues 535–558 (SNSS…SASP) and 587–626 (NANN…NNGN). The segment covering 627–659 (TASGSSCNTTPNLLPAPTNVSPIQNRARSSPMT) has biased composition (polar residues). Residues 804–824 (KKKEKDKEKEKDKEKEKEKEI) are compositionally biased toward basic and acidic residues. The span at 827–841 (NISTSTTPNKKNGTL) shows a compositional bias: polar residues. Positions 1106 to 1118 (GTPTTTSGDNTPL) are enriched in polar residues. Low complexity-rich tracts occupy residues 1119–1182 (TNTA…NSSI), 1196–1221 (EQQQ…QQQP), and 1476–1492 (SSKV…SPIL). Residues 1493–1507 (SSPPPPMKQPPPQVI) show a composition bias toward pro residues. Residues 1527–1851 (FEIIKPISRG…AYEVKTHPFF (325 aa)) enclose the Protein kinase domain. ATP contacts are provided by residues 1533-1541 (ISRGAFGRV) and Lys-1556. Asp-1650 (proton acceptor) is an active-site residue. 3 stretches are compositionally biased toward low complexity: residues 1687-1729 (NTNT…SQTN), 1902-1999 (SQPQ…NINN), and 2006-2052 (NNNS…QINN). 2 disordered regions span residues 1687–1741 (NTNT…KNTL) and 1902–2070 (SQPQ…SKIE). The AGC-kinase C-terminal domain maps to 1852–1911 (ANVNWDTLIDQEMDNIFLPKPENNYDTDYFWDRQSMYDDEAEDDFLTINQSQPQHQSQHQ).

Belongs to the protein kinase superfamily. AGC Ser/Thr protein kinase family.

The enzyme catalyses L-seryl-[protein] + ATP = O-phospho-L-seryl-[protein] + ADP + H(+). It catalyses the reaction L-threonyl-[protein] + ATP = O-phospho-L-threonyl-[protein] + ADP + H(+). The chain is Probable serine/threonine-protein kinase DDB_G0272282 from Dictyostelium discoideum (Social amoeba).